Reading from the N-terminus, the 338-residue chain is GTP 3',8-cyclase (338 aa).

Positions 8 to 227 constitute a Radical SAM core domain; it reads KLQRPLKDLR…DMIHQVMPLE (220 aa). Residue arginine 17 participates in GTP binding. 2 residues coordinate [4Fe-4S] cluster: cysteine 24 and cysteine 28. Tyrosine 30 provides a ligand contact to S-adenosyl-L-methionine. Residue cysteine 31 coordinates [4Fe-4S] cluster. Arginine 71 contributes to the GTP binding site. Residue glycine 75 participates in S-adenosyl-L-methionine binding. Threonine 102 contacts GTP. Position 126 (serine 126) interacts with S-adenosyl-L-methionine. Residue lysine 163 participates in GTP binding. Methionine 197 lines the S-adenosyl-L-methionine pocket. [4Fe-4S] cluster is bound by residues cysteine 261 and cysteine 264. 266–268 is a binding site for GTP; sequence RAR. Cysteine 278 is a [4Fe-4S] cluster binding site.

The protein belongs to the radical SAM superfamily. MoaA family. In terms of assembly, monomer and homodimer. [4Fe-4S] cluster is required as a cofactor.

The enzyme catalyses GTP + AH2 + S-adenosyl-L-methionine = (8S)-3',8-cyclo-7,8-dihydroguanosine 5'-triphosphate + 5'-deoxyadenosine + L-methionine + A + H(+). The protein operates within cofactor biosynthesis; molybdopterin biosynthesis. Catalyzes the cyclization of GTP to (8S)-3',8-cyclo-7,8-dihydroguanosine 5'-triphosphate. The chain is GTP 3',8-cyclase from Bacillus anthracis (strain CDC 684 / NRRL 3495).